Consider the following 242-residue polypeptide: Biosynthetic peptidoglycan transglycosylase (242 aa).

Residues Leu19–Val39 form a helical membrane-spanning segment.

Belongs to the glycosyltransferase 51 family.

The protein localises to the cell inner membrane. The catalysed reaction is [GlcNAc-(1-&gt;4)-Mur2Ac(oyl-L-Ala-gamma-D-Glu-L-Lys-D-Ala-D-Ala)](n)-di-trans,octa-cis-undecaprenyl diphosphate + beta-D-GlcNAc-(1-&gt;4)-Mur2Ac(oyl-L-Ala-gamma-D-Glu-L-Lys-D-Ala-D-Ala)-di-trans,octa-cis-undecaprenyl diphosphate = [GlcNAc-(1-&gt;4)-Mur2Ac(oyl-L-Ala-gamma-D-Glu-L-Lys-D-Ala-D-Ala)](n+1)-di-trans,octa-cis-undecaprenyl diphosphate + di-trans,octa-cis-undecaprenyl diphosphate + H(+). Its pathway is cell wall biogenesis; peptidoglycan biosynthesis. Functionally, peptidoglycan polymerase that catalyzes glycan chain elongation from lipid-linked precursors. This is Biosynthetic peptidoglycan transglycosylase from Escherichia coli O17:K52:H18 (strain UMN026 / ExPEC).